The following is a 330-amino-acid chain: HPr kinase/phosphorylase (330 aa).

Residues His-153 and Lys-174 contribute to the active site. 168–175 contacts ATP; the sequence is GKSGLGKS. Mg(2+) is bound at residue Ser-175. Asp-192 serves as the catalytic Proton acceptor; for phosphorylation activity. Proton donor; for dephosphorylation activity. An important for the catalytic mechanism of both phosphorylation and dephosphorylation region spans residues 217 to 226; the sequence is MEIRGLGVVD. Position 218 (Glu-218) interacts with Mg(2+). The active site involves Arg-259. Positions 280–285 are important for the catalytic mechanism of dephosphorylation; it reads PIFPGK.

Belongs to the HPrK/P family. Homohexamer. Requires Mg(2+) as cofactor.

The enzyme catalyses [HPr protein]-L-serine + ATP = [HPr protein]-O-phospho-L-serine + ADP + H(+). It catalyses the reaction [HPr protein]-O-phospho-L-serine + phosphate + H(+) = [HPr protein]-L-serine + diphosphate. Catalyzes the ATP- as well as the pyrophosphate-dependent phosphorylation of a specific serine residue in HPr, a phosphocarrier protein of the phosphoenolpyruvate-dependent sugar phosphotransferase system (PTS). HprK/P also catalyzes the pyrophosphate-producing, inorganic phosphate-dependent dephosphorylation (phosphorolysis) of seryl-phosphorylated HPr (P-Ser-HPr). The protein is HPr kinase/phosphorylase of Chlorobium limicola (strain DSM 245 / NBRC 103803 / 6330).